The chain runs to 349 residues: Ferredoxin--NADP reductase 1 (349 aa).

Glu-36, Lys-44, Tyr-48, Val-88, Leu-123, Asp-290, and Ser-331 together coordinate FAD.

Belongs to the ferredoxin--NADP reductase type 2 family. In terms of assembly, homodimer. It depends on FAD as a cofactor.

It carries out the reaction 2 reduced [2Fe-2S]-[ferredoxin] + NADP(+) + H(+) = 2 oxidized [2Fe-2S]-[ferredoxin] + NADPH. The sequence is that of Ferredoxin--NADP reductase 1 from Lysinibacillus sphaericus (strain C3-41).